We begin with the raw amino-acid sequence, 31 residues long: AFCNLRRCELSCRSLGLLGKCIGEECKCVPY.

Disulfide bonds link Cys3-Cys21, Cys8-Cys26, and Cys12-Cys28. Residues Arg6 to Glu9 form a [R/K]XCQ motif region. A Tyrosine amide modification is found at Tyr31.

The protein belongs to the short scorpion toxin superfamily. Potassium channel inhibitor family. Alpha-KTx 05 subfamily. Expressed by the venom gland.

Its subcellular location is the secreted. Blocks small conductance calcium-activated potassium channels. Shows activity on KCa2.2/KCNN2 (IC(50)=0.0243 nM), KCa2.3/KCNN3 (IC(50)=1.7 nM), and KCa2.1/KCNN1 (IC(50)=42 nM). Induces cell death when tested on human T lymphoblastic leukemia Jurkat E6.1 and human breast cancer MDA-MB-231 cell lines which constituvely express KCa2.2/KCNN2, but not on human peripheral blood lymphocytes (which do not express KCa2.2/KCNN2). The polypeptide is Potassium channel toxin alpha-KTx 5.4 (Hottentotta tamulus (Eastern Indian scorpion)).